The following is a 140-amino-acid chain: Glycine cleavage system H protein (140 aa).

The 83-residue stretch at 22–104 folds into the Lipoyl-binding domain; that stretch reads EVVIGITRFA…YGKGWMLRLK (83 aa). K63 is subject to N6-lipoyllysine.

It belongs to the GcvH family. The glycine cleavage system is composed of four proteins: P, T, L and H. The cofactor is (R)-lipoate.

Its function is as follows. The glycine cleavage system catalyzes the degradation of glycine. The H protein shuttles the methylamine group of glycine from the P protein to the T protein. The protein is Glycine cleavage system H protein of Magnetococcus marinus (strain ATCC BAA-1437 / JCM 17883 / MC-1).